The chain runs to 227 residues: MASHKELIKNGLWDNNPALVQLLGLCPLLAVSATVTNALGLGIATILVLVGSNLIVSLVRQWIPQEVRIPVFVMIIASLVTCVQLLMNAYAYGLYLSLGIFIPLIVTNCIIIGRAESFASKNDPLPAVLDGLWMGMGMTAVLVLLGAMREILGNGTLFDGADLLLGDWATILRIELFHVDSHFLLAMLPPGAFLGVGFLIALKNVIDKKMADRQPKEKAEIERVRIS.

6 helical membrane-spanning segments follow: residues 18–38, 39–59, 69–89, 93–113, 125–145, and 182–202; these read ALVQLLGLCPLLAVSATVTNA, LGLGIATILVLVGSNLIVSLV, IPVFVMIIASLVTCVQLLMNA, GLYLSLGIFIPLIVTNCIIIG, LPAVLDGLWMGMGMTAVLVLL, and HFLLAMLPPGAFLGVGFLIAL.

The protein belongs to the NqrDE/RnfAE family. In terms of assembly, the complex is composed of six subunits: RnfA, RnfB, RnfC, RnfD, RnfE and RnfG.

The protein resides in the cell inner membrane. Its function is as follows. Part of a membrane-bound complex that couples electron transfer with translocation of ions across the membrane. The sequence is that of Ion-translocating oxidoreductase complex subunit E from Aliivibrio fischeri (strain MJ11) (Vibrio fischeri).